A 474-amino-acid chain; its full sequence is tRNA-2-methylthio-N(6)-dimethylallyladenosine synthase (474 aa).

One can recognise an MTTase N-terminal domain in the interval 3–120; sequence KKLHIKTWGC…LPEMINHVNG (118 aa). [4Fe-4S] cluster contacts are provided by Cys12, Cys49, Cys83, Cys157, Cys161, and Cys164. Positions 143–375 constitute a Radical SAM core domain; it reads RAEGPTAFVS…QERITQQAMQ (233 aa). Positions 378-441 constitute a TRAM domain; the sequence is RRMKGKVQRI…PNSLRGVLLR (64 aa).

The protein belongs to the methylthiotransferase family. MiaB subfamily. In terms of assembly, monomer. [4Fe-4S] cluster serves as cofactor.

The protein resides in the cytoplasm. It catalyses the reaction N(6)-dimethylallyladenosine(37) in tRNA + (sulfur carrier)-SH + AH2 + 2 S-adenosyl-L-methionine = 2-methylsulfanyl-N(6)-dimethylallyladenosine(37) in tRNA + (sulfur carrier)-H + 5'-deoxyadenosine + L-methionine + A + S-adenosyl-L-homocysteine + 2 H(+). Catalyzes the methylthiolation of N6-(dimethylallyl)adenosine (i(6)A), leading to the formation of 2-methylthio-N6-(dimethylallyl)adenosine (ms(2)i(6)A) at position 37 in tRNAs that read codons beginning with uridine. The sequence is that of tRNA-2-methylthio-N(6)-dimethylallyladenosine synthase from Sodalis glossinidius (strain morsitans).